A 306-amino-acid chain; its full sequence is Ribonuclease BN (306 aa).

Zn(2+) contacts are provided by histidine 64, histidine 66, aspartate 68, histidine 69, histidine 141, aspartate 212, and histidine 270. Residue aspartate 68 is the Proton acceptor of the active site.

Belongs to the RNase Z family. RNase BN subfamily. Homodimer. Zn(2+) serves as cofactor.

Functionally, zinc phosphodiesterase, which has both exoribonuclease and endoribonuclease activities. The sequence is that of Ribonuclease BN from Klebsiella pneumoniae subsp. pneumoniae (strain ATCC 700721 / MGH 78578).